The sequence spans 289 residues: Formamidopyrimidine-DNA glycosylase (289 aa).

Pro2 (schiff-base intermediate with DNA) is an active-site residue. The active-site Proton donor is the Glu3. Lys61 serves as the catalytic Proton donor; for beta-elimination activity. DNA is bound by residues His97, Arg119, and Lys168. The FPG-type zinc-finger motif lies at 254 to 288; sequence NAYGRAGKPCPRCGEPIVRVQWTNRSSHFCPQCQS. The active-site Proton donor; for delta-elimination activity is the Arg278.

This sequence belongs to the FPG family. In terms of assembly, monomer. Requires Zn(2+) as cofactor.

The enzyme catalyses Hydrolysis of DNA containing ring-opened 7-methylguanine residues, releasing 2,6-diamino-4-hydroxy-5-(N-methyl)formamidopyrimidine.. The catalysed reaction is 2'-deoxyribonucleotide-(2'-deoxyribose 5'-phosphate)-2'-deoxyribonucleotide-DNA = a 3'-end 2'-deoxyribonucleotide-(2,3-dehydro-2,3-deoxyribose 5'-phosphate)-DNA + a 5'-end 5'-phospho-2'-deoxyribonucleoside-DNA + H(+). Functionally, involved in base excision repair of DNA damaged by oxidation or by mutagenic agents. Acts as a DNA glycosylase that recognizes and removes damaged bases. Has a preference for oxidized purines, such as 7,8-dihydro-8-oxoguanine (8-oxoG). Has AP (apurinic/apyrimidinic) lyase activity and introduces nicks in the DNA strand. Cleaves the DNA backbone by beta-delta elimination to generate a single-strand break at the site of the removed base with both 3'- and 5'-phosphates. The protein is Formamidopyrimidine-DNA glycosylase of Corynebacterium urealyticum (strain ATCC 43042 / DSM 7109).